Here is a 115-residue protein sequence, read N- to C-terminus: Large ribosomal subunit protein uL18 (115 aa).

It belongs to the universal ribosomal protein uL18 family. Part of the 50S ribosomal subunit; part of the 5S rRNA/L5/L18/L25 subcomplex. Contacts the 5S and 23S rRNAs.

Its function is as follows. This is one of the proteins that bind and probably mediate the attachment of the 5S RNA into the large ribosomal subunit, where it forms part of the central protuberance. This is Large ribosomal subunit protein uL18 from Baumannia cicadellinicola subsp. Homalodisca coagulata.